A 94-amino-acid polypeptide reads, in one-letter code: MFTINAEVRKEQGKGASRRLRAANKFPAIIYGGKEAPLAIELDHDKVMNIQAKAEFYSEVLTIVVDGKEIKVKAQDVQRHPYKPKLQHIDFVRA.

The protein belongs to the bacterial ribosomal protein bL25 family. As to quaternary structure, part of the 50S ribosomal subunit; part of the 5S rRNA/L5/L18/L25 subcomplex. Contacts the 5S rRNA. Binds to the 5S rRNA independently of L5 and L18.

Its function is as follows. This is one of the proteins that binds to the 5S RNA in the ribosome where it forms part of the central protuberance. The chain is Large ribosomal subunit protein bL25 from Escherichia coli O157:H7.